We begin with the raw amino-acid sequence, 184 residues long: Guanylate kinase (184 aa).

In terms of domain architecture, Guanylate kinase-like spans 5–183 (NGLIVITGPS…ALLEIKKLIK (179 aa)). ATP is bound at residue 12-19 (GPSGVGKG).

It belongs to the guanylate kinase family.

The protein resides in the cytoplasm. It catalyses the reaction GMP + ATP = GDP + ADP. Functionally, essential for recycling GMP and indirectly, cGMP. This Prochlorococcus marinus (strain SARG / CCMP1375 / SS120) protein is Guanylate kinase.